The sequence spans 180 residues: Large ribosomal subunit protein uL6 (180 aa).

It belongs to the universal ribosomal protein uL6 family. In terms of assembly, part of the 50S ribosomal subunit.

Functionally, this protein binds to the 23S rRNA, and is important in its secondary structure. It is located near the subunit interface in the base of the L7/L12 stalk, and near the tRNA binding site of the peptidyltransferase center. The chain is Large ribosomal subunit protein uL6 from Clostridium kluyveri (strain NBRC 12016).